The following is a 362-amino-acid chain: Dual-specificity RNA methyltransferase RlmN (362 aa).

Glutamate 100 acts as the Proton acceptor in catalysis. A Radical SAM core domain is found at 106–345 (EPDRNTLCIS…VFIRNSRGED (240 aa)). Cysteine 113 and cysteine 350 are joined by a disulfide. Cysteine 120, cysteine 124, and cysteine 127 together coordinate [4Fe-4S] cluster. Residues 177–178 (GE), serine 209, 231–233 (SLH), and asparagine 307 contribute to the S-adenosyl-L-methionine site. Cysteine 350 (S-methylcysteine intermediate) is an active-site residue.

This sequence belongs to the radical SAM superfamily. RlmN family. [4Fe-4S] cluster is required as a cofactor.

It localises to the cytoplasm. The catalysed reaction is adenosine(2503) in 23S rRNA + 2 reduced [2Fe-2S]-[ferredoxin] + 2 S-adenosyl-L-methionine = 2-methyladenosine(2503) in 23S rRNA + 5'-deoxyadenosine + L-methionine + 2 oxidized [2Fe-2S]-[ferredoxin] + S-adenosyl-L-homocysteine. It catalyses the reaction adenosine(37) in tRNA + 2 reduced [2Fe-2S]-[ferredoxin] + 2 S-adenosyl-L-methionine = 2-methyladenosine(37) in tRNA + 5'-deoxyadenosine + L-methionine + 2 oxidized [2Fe-2S]-[ferredoxin] + S-adenosyl-L-homocysteine. Functionally, specifically methylates position 2 of adenine 2503 in 23S rRNA and position 2 of adenine 37 in tRNAs. m2A2503 modification seems to play a crucial role in the proofreading step occurring at the peptidyl transferase center and thus would serve to optimize ribosomal fidelity. The sequence is that of Dual-specificity RNA methyltransferase RlmN from Desulfotalea psychrophila (strain LSv54 / DSM 12343).